The sequence spans 360 residues: DNA replication and repair protein RecF (360 aa).

ATP is bound at residue 30 to 37 (GHNGSGKT).

Belongs to the RecF family.

Its subcellular location is the cytoplasm. The RecF protein is involved in DNA metabolism; it is required for DNA replication and normal SOS inducibility. RecF binds preferentially to single-stranded, linear DNA. It also seems to bind ATP. The sequence is that of DNA replication and repair protein RecF from Shewanella pealeana (strain ATCC 700345 / ANG-SQ1).